The following is a 345-amino-acid chain: NADH-quinone oxidoreductase subunit H (345 aa).

The Lumenal portion of the chain corresponds to 1–15; the sequence is MADFWATSLGQTLIL. The chain crosses the membrane as a helical span at residues 16 to 35; the sequence is LAQGLGIIAFVMIGLLLLVW. At 36 to 86 the chain is on the cytoplasmic side; it reads GDRKIWAAVQMRKGPNVVGAFGLLQSVADAAKYVFKEIVVPAGVDKPVYFL. Residues 87-106 traverse the membrane as a helical segment; that stretch reads APMLSLVLALLAWVVVPFNE. Residues 107–110 are Lumenal-facing; the sequence is GWVM. A helical transmembrane segment spans residues 111–130; it reads ADINVAVLFVFAVSSLEVYG. Over 131 to 156 the chain is Cytoplasmic; the sequence is VIMGGWASNSKYPFLGSLRSAAQMIS. A helical transmembrane segment spans residues 157–176; sequence YEVSMGLIIVGVIISTGSMN. Topologically, residues 177-191 are lumenal; sequence LSAIVEAQRGDFGLL. The helical transmembrane segment at 192-211 threads the bilayer; the sequence is NWYWLPHLPMVALFFISALA. Residues 212–245 are Cytoplasmic-facing; sequence ETNRPPFDLPEAESELVAGFMVEYSSTPYLLFMA. A helical membrane pass occupies residues 246-265; it reads GEYIAVWLMCALTSVLFFGG. Residues 266–276 lie on the Lumenal side of the membrane; that stretch reads WLSPIPGVPDG. A helical membrane pass occupies residues 277–296; the sequence is VLWMVAKMAAVFFVFAMVKA. Topologically, residues 297 to 313 are cytoplasmic; that stretch reads IVPRYRYDQLMRIGWKV. The helical transmembrane segment at 314–333 threads the bilayer; sequence FLPLSLAWVVVVAFLAKFEV. Over 334–345 the chain is Lumenal; that stretch reads LGGFWARWSIGA.

This sequence belongs to the complex I subunit 1 family. NDH-1 is composed of 14 different subunits. Subunits NuoA, H, J, K, L, M, N constitute the membrane sector of the complex.

It is found in the cellular chromatophore membrane. The catalysed reaction is a quinone + NADH + 5 H(+)(in) = a quinol + NAD(+) + 4 H(+)(out). Functionally, NDH-1 shuttles electrons from NADH, via FMN and iron-sulfur (Fe-S) centers, to quinones in the respiratory chain. The immediate electron acceptor for the enzyme in this species is believed to be ubiquinone. Couples the redox reaction to proton translocation (for every two electrons transferred, four hydrogen ions are translocated across the cytoplasmic membrane), and thus conserves the redox energy in a proton gradient. This subunit may bind ubiquinone. This is NADH-quinone oxidoreductase subunit H from Rhodobacter capsulatus (Rhodopseudomonas capsulata).